We begin with the raw amino-acid sequence, 909 residues long: Zinc finger and BTB domain-containing protein 41 (909 aa).

One can recognise a BTB domain in the interval 88-152 (CDLLIIVEGK…LYTSEFFVYK (65 aa)). A C2H2-type 1 zinc finger spans residues 207–230 (HQCKFCSRHFCYKKSLENHLAKTH). A disordered region spans residues 252–344 (RSKRNRKCPV…PEAGDSVGNV (93 aa)). Over residues 266–275 (TSDDEQESGD) the composition is skewed to acidic residues. Residues 284–295 (NFDKEKSDRNDS) are compositionally biased toward basic and acidic residues. A compositionally biased stretch (acidic residues) spans 296 to 322 (EDPGSEYNAEEDELEEEMSDEYSDIEE). 13 consecutive C2H2-type zinc fingers follow at residues 361–383 (LQCPKCDKTFDRIGKYESHTRVH), 389–411 (FECDICHQRYSTKSNLTVHRKKH), 422–445 (HKCPYCNKLHASKKTLAKHVKRFH), 463–485 (WKCDICKKSFTRRPHLEEHMILH), 491–514 (FKCTYCEEHFKSRFARLKHQEKFH), 518–541 (FPCDICGRQFNDTGNLKRHIECTH), 547–569 (WTCFICGKSVRERTTLKEHLRIH), 575–597 (HLCSICGQSFRHGSSYRLHLRVH), 603–625 (YECDECGKTFIRHDHLTKHKKIH), 631–654 (HQCEECGKCFGRRDHLTVHYKSVH), 668–690 (HQCDVCKKIFKGKSSLEMHFRTH), 696–718 (YKCQICNQSFRIKKTLTKHLVIH), and 724–747 (FNCQHCNATFKRKDKLKYHIDHVH).

It is found in the nucleus. Functionally, may be involved in transcriptional regulation. This is Zinc finger and BTB domain-containing protein 41 (ZBTB41) from Homo sapiens (Human).